A 132-amino-acid chain; its full sequence is Small integral membrane protein 33 (132 aa).

Residues 1-28 (MHQAGHYSWPSPAVNSSSEQEPQRQLPE) are disordered. Asn15 carries N-linked (GlcNAc...) asparagine glycosylation. A helical membrane pass occupies residues 43–63 (PVVTVIVAVFVLLAVCIIVAV). Residues 99-132 (PQDSPEEAPPGPLVPGSCPAPDGPRPSIDEVTCL) are disordered.

It localises to the membrane. The chain is Small integral membrane protein 33 from Homo sapiens (Human).